The primary structure comprises 209 residues: Large ribosomal subunit protein uL3 (209 aa).

Residues 127–147 (YSRGPMGHGSKSHRVAGARSA) are disordered.

Belongs to the universal ribosomal protein uL3 family. As to quaternary structure, part of the 50S ribosomal subunit. Forms a cluster with proteins L14 and L19.

One of the primary rRNA binding proteins, it binds directly near the 3'-end of the 23S rRNA, where it nucleates assembly of the 50S subunit. The sequence is that of Large ribosomal subunit protein uL3 from Finegoldia magna (strain ATCC 29328 / DSM 20472 / WAL 2508) (Peptostreptococcus magnus).